The chain runs to 196 residues: MATPRKPNRRDEILQALAEMLESNEGAARITTAKLAKQVGVSEAALYRHFPSKAKMFEGLIEFIEESIFSRVNRILEDEKDTLKRIELLLKLLLAFAERNPGLTRIMTGHALMFENERLRSRINQIFERIELQFKQILRERKLREGKAFPIDESILAAQLVGQVEGSFCRFVRSDFKYQPTENFNEYWALLSAQIQ.

Positions 7–68 (PNRRDEILQA…GLIEFIEESI (62 aa)) constitute an HTH tetR-type domain. The segment at residues 31 to 50 (TTAKLAKQVGVSEAALYRHF) is a DNA-binding region (H-T-H motif). The stretch at 71–93 (RVNRILEDEKDTLKRIELLLKLL) forms a coiled coil.

This sequence belongs to the nucleoid occlusion factor SlmA family. In terms of assembly, homodimer. Interacts with FtsZ.

The protein resides in the cytoplasm. It localises to the nucleoid. Functionally, required for nucleoid occlusion (NO) phenomenon, which prevents Z-ring formation and cell division over the nucleoid. Acts as a DNA-associated cell division inhibitor that binds simultaneously chromosomal DNA and FtsZ, and disrupts the assembly of FtsZ polymers. SlmA-DNA-binding sequences (SBS) are dispersed on non-Ter regions of the chromosome, preventing FtsZ polymerization at these regions. This is Nucleoid occlusion factor SlmA from Aliivibrio fischeri (strain MJ11) (Vibrio fischeri).